Consider the following 379-residue polypeptide: SUN domain-containing protein 5 (379 aa).

The segment at M1–M45 is disordered. The Nuclear segment spans residues M1–T105. Residues G31 to M45 are compositionally biased toward polar residues. Residues G106 to L122 form a helical membrane-spanning segment. The Perinuclear space segment spans residues P123–D379. The stretch at L141–A182 forms a coiled coil. The SUN domain maps to G205–A364.

Probable homotrimer. Interacts with DNAJB13. Highly glycosylated in the Golgi apparatus during spermiogenesis. Sperm (at protein level). Widely expressed. Conflictingly shown to be specifically expressed in testis.

The protein localises to the nucleus inner membrane. The protein resides in the golgi apparatus. Functionally, plays an essential role in anchoring sperm head to the tail. Is responsible for the attachment of the coupling apparatus to the sperm nuclear envelope. The chain is SUN domain-containing protein 5 (SUN5) from Homo sapiens (Human).